The following is a 306-amino-acid chain: Serrate RNA effector molecule homolog (306 aa).

Positions 1 to 28 are disordered; the sequence is HKEEELLGSSGGPPPEEPPKEGNPAEIN. Position 101 is a phosphothreonine (T101). S109 carries the post-translational modification Phosphoserine. The disordered stretch occupies residues 251-284; sequence GPPYPHGPYGAGRGNYDAFRGQGGYPGKPRNRMV. Residues R263, R270, and R280 each carry the omega-N-methylarginine modification.

Belongs to the ARS2 family. As to quaternary structure, interacts with CASP8AP2, ERBB4, NCBP1/CBP80 and DROSHA. Interacts with LUZP4. Interacts with NCBP2/CBP20 and NCBP3.

It localises to the nucleus. The protein localises to the nucleoplasm. It is found in the cytoplasm. Acts as a mediator between the cap-binding complex (CBC) and the primary microRNAs (miRNAs) processing machinery during cell proliferation. Contributes to the stability and delivery of capped primary miRNA transcripts to the primary miRNA processing complex containing DGCR8 and DROSHA, thereby playing a role in RNA-mediated gene silencing (RNAi) by miRNAs. Binds capped RNAs (m7GpppG-capped RNA); however interaction is probably mediated via its interaction with NCBP1/CBP80 component of the CBC complex. Involved in cell cycle progression at S phase. Does not directly confer arsenite resistance but rather modulates arsenic sensitivity. Independently of its activity on miRNAs, necessary and sufficient to promote neural stem cell self-renewal. Does so by directly binding SOX2 promoter and positively regulating its transcription. The chain is Serrate RNA effector molecule homolog (SRRT) from Cricetulus griseus (Chinese hamster).